The chain runs to 185 residues: Elongation factor P (185 aa).

It belongs to the elongation factor P family.

Its subcellular location is the cytoplasm. Its pathway is protein biosynthesis; polypeptide chain elongation. Functionally, involved in peptide bond synthesis. Stimulates efficient translation and peptide-bond synthesis on native or reconstituted 70S ribosomes in vitro. Probably functions indirectly by altering the affinity of the ribosome for aminoacyl-tRNA, thus increasing their reactivity as acceptors for peptidyl transferase. The sequence is that of Elongation factor P from Geobacillus sp. (strain WCH70).